The chain runs to 275 residues: Calcyphosin (275 aa).

The interval 59–87 (PGTTQLTQGPAGRTLGQTQASCPEPRPSM) is disordered. 4 consecutive EF-hand domains span residues 107–142 (SGIQ…LGLV), 143–178 (LDQA…PMSQ), 179–214 (AREA…RAHP), and 222–258 (TEDE…VSAS). Ca(2+)-binding residues include Asp120, Asp122, Ser124, Ser126, Glu131, Asp156, Asn158, Ser160, Thr162, Glu167, Asp192, Ser194, Asp196, and Asp203. Ser126 carries the phosphoserine; by PKA modification.

Monomer. Does not form oligomers in the presence of calcium.

It localises to the cytoplasm. Its function is as follows. Calcium-binding protein. May play a role in cellular signaling events (Potential). This chain is Calcyphosin, found in Homo sapiens (Human).